The primary structure comprises 645 residues: Crossover junction endonuclease mus-81 (645 aa).

Disordered stretches follow at residues 98–119 (LAAAGAVQDEQPPPPKRARTAR) and 219–310 (GVAG…EDRK). Over residues 223-252 (SANTSRNAIASGSGTSNPNRSENVNPNRQD) the composition is skewed to polar residues. The segment covering 296-305 (DSDDEDPKYD) has biased composition (acidic residues). The region spanning 353–459 (ELVLDTREVQ…NVVYIIENYN (107 aa)) is the ERCC4 domain.

This sequence belongs to the XPF family. As to quaternary structure, interacts with eme-1. The cofactor is Mg(2+).

It localises to the nucleus. Interacts with eme-1 to form a DNA structure-specific endonuclease with substrate preference for branched DNA structures with a 5'-end at the branch nick. Typical substrates include 3'-flap structures, D-loops, replication forks and nicked Holliday junctions. May be required in mitosis for the processing of stalled or collapsed replication fork intermediates. May be required in meiosis for the repair of meiosis-specific double strand breaks subsequent to single-end invasion (SEI). The sequence is that of Crossover junction endonuclease mus-81 (mus-81) from Neurospora crassa (strain ATCC 24698 / 74-OR23-1A / CBS 708.71 / DSM 1257 / FGSC 987).